Here is a 177-residue protein sequence, read N- to C-terminus: Large ribosomal subunit protein uL6 (177 aa).

This sequence belongs to the universal ribosomal protein uL6 family. In terms of assembly, part of the 50S ribosomal subunit.

In terms of biological role, this protein binds to the 23S rRNA, and is important in its secondary structure. It is located near the subunit interface in the base of the L7/L12 stalk, and near the tRNA binding site of the peptidyltransferase center. The protein is Large ribosomal subunit protein uL6 of Yersinia pseudotuberculosis serotype O:1b (strain IP 31758).